The following is a 150-amino-acid chain: Large-conductance mechanosensitive channel (150 aa).

2 helical membrane passes run 14 to 34 (VIDL…VTSL) and 81 to 101 (GLFI…FIVI).

The protein belongs to the MscL family. As to quaternary structure, homopentamer.

It localises to the cell membrane. Channel that opens in response to stretch forces in the membrane lipid bilayer. May participate in the regulation of osmotic pressure changes within the cell. This chain is Large-conductance mechanosensitive channel, found in Desulfitobacterium hafniense (strain DSM 10664 / DCB-2).